A 945-amino-acid chain; its full sequence is Xylanolytic transcriptional activator xlnR (945 aa).

The span at 1–23 (MSTPSIPQFTSPFSPFSSGSHST) shows a compositional bias: low complexity. Disordered stretches follow at residues 1-33 (MSTP…TVGL) and 52-93 (DAAG…SGFR). The segment covering 63 to 72 (PSTSLRNSMS) has biased composition (polar residues). The segment covering 73 to 84 (HTKDQPPFDNEK) has biased composition (basic and acidic residues). The zn(2)-C6 fungal-type DNA-binding region spans 125–151 (CDQCNQLRTKCDGQHPCAHCIEFGLTC). Disordered stretches follow at residues 172-210 (AAAA…GTYD) and 559-601 (PPNV…INVT). Residues 176–188 (TQGSNGHSGQANA) are compositionally biased toward polar residues. The segment covering 565 to 581 (ARQDGERDGDGEADKRH) has biased composition (basic and acidic residues).

Belongs to the xlnR/xlr1 family.

It is found in the nucleus. In terms of biological role, transcriptional activator of the xylanolytic system. Involved in the regulation of extracellular cellulolytic and xylanolytic genes and in the regulation of the intracellular activities of D-xylose catabolic genes in the pentose catabolic pathway (PCP) in response to the presence of D-xylose. Binds to the DNA sequence 5'-GGCTAAA-3'. The chain is Xylanolytic transcriptional activator xlnR (xlnR) from Aspergillus niger (strain ATCC MYA-4892 / CBS 513.88 / FGSC A1513).